Reading from the N-terminus, the 533-residue chain is Putative adhesin P1-like protein MPN_409 (533 aa).

Disordered stretches follow at residues 15–45 (KNHR…GSRS) and 92–166 (SGWR…SITP). Low complexity predominate over residues 28-45 (TGAGSSSGTSTNTSGSRS). The segment covering 95 to 107 (RNDKNGQSDENHT) has biased composition (basic and acidic residues).

The protein belongs to the adhesin P1 family.

In Mycoplasma pneumoniae (strain ATCC 29342 / M129 / Subtype 1) (Mycoplasmoides pneumoniae), this protein is Putative adhesin P1-like protein MPN_409.